Reading from the N-terminus, the 151-residue chain is MNKTPLPNPETLAPRWYLVDAANQRLGRLAAAVATLLRGKHKPDFTPHLDTGDYVIVINAEKVVVTGKKRTQKLYRRHSGRPGGMKVETFAQLQARLPERVVEKAVKGMLPHTRLGRRQFTKLKVYVGPNHPHEAQQPQVYPLNTIPGAKA.

Belongs to the universal ribosomal protein uL13 family. As to quaternary structure, part of the 50S ribosomal subunit.

In terms of biological role, this protein is one of the early assembly proteins of the 50S ribosomal subunit, although it is not seen to bind rRNA by itself. It is important during the early stages of 50S assembly. The protein is Large ribosomal subunit protein uL13 of Synechococcus sp. (strain JA-2-3B'a(2-13)) (Cyanobacteria bacterium Yellowstone B-Prime).